The following is a 193-amino-acid chain: Holliday junction branch migration complex subunit RuvA (193 aa).

A domain I region spans residues 1-64 (MIGRIAGILL…EDAHLLYGFL (64 aa)). The tract at residues 65–139 (TPQERTTFRE…GKLGADLGAL (75 aa)) is domain II. Positions 139–143 (LAGAA) are flexible linker. The segment at 144-193 (SASDHATDILNALLALGYSEKEGLAAIKNVPAGTGVSEGIKLALKALSKA) is domain III.

Belongs to the RuvA family. In terms of assembly, homotetramer. Forms an RuvA(8)-RuvB(12)-Holliday junction (HJ) complex. HJ DNA is sandwiched between 2 RuvA tetramers; dsDNA enters through RuvA and exits via RuvB. An RuvB hexamer assembles on each DNA strand where it exits the tetramer. Each RuvB hexamer is contacted by two RuvA subunits (via domain III) on 2 adjacent RuvB subunits; this complex drives branch migration. In the full resolvosome a probable DNA-RuvA(4)-RuvB(12)-RuvC(2) complex forms which resolves the HJ.

The protein localises to the cytoplasm. In terms of biological role, the RuvA-RuvB-RuvC complex processes Holliday junction (HJ) DNA during genetic recombination and DNA repair, while the RuvA-RuvB complex plays an important role in the rescue of blocked DNA replication forks via replication fork reversal (RFR). RuvA specifically binds to HJ cruciform DNA, conferring on it an open structure. The RuvB hexamer acts as an ATP-dependent pump, pulling dsDNA into and through the RuvAB complex. HJ branch migration allows RuvC to scan DNA until it finds its consensus sequence, where it cleaves and resolves the cruciform DNA. The sequence is that of Holliday junction branch migration complex subunit RuvA from Burkholderia cenocepacia (strain HI2424).